A 505-amino-acid chain; its full sequence is RNA-splicing ligase RtcB homolog (505 aa).

Residues aspartate 119, cysteine 122, histidine 227, and histidine 259 each coordinate Mn(2+). Residue asparagine 226–glutamate 230 coordinates GMP. Residue serine 300 is modified to Phosphoserine. Histidine 353 lines the Mn(2+) pocket. GMP contacts are provided by residues histidine 353–asparagine 354, glycine 402–methionine 405, serine 409, and histidine 428–glycine 431. Histidine 428 serves as the catalytic GMP-histidine intermediate. A Glycyl lysine isopeptide (Lys-Gly) (interchain with G-Cter in SUMO2) cross-link involves residue lysine 496. Lysine 504 provides a ligand contact to GMP.

Belongs to the RtcB family. Catalytic component of the tRNA-splicing ligase complex. Mn(2+) serves as cofactor.

It localises to the nucleus. It is found in the cytoplasm. The enzyme catalyses a 3'-end 3'-phospho-ribonucleotide-RNA + a 5'-end dephospho-ribonucleoside-RNA + GTP = a ribonucleotidyl-ribonucleotide-RNA + GMP + diphosphate. The catalysed reaction is a 3'-end 2',3'-cyclophospho-ribonucleotide-RNA + a 5'-end dephospho-ribonucleoside-RNA + GTP + H2O = a ribonucleotidyl-ribonucleotide-RNA + GMP + diphosphate + H(+). Catalytic subunit of the tRNA-splicing ligase complex that acts by directly joining spliced tRNA halves to mature-sized tRNAs by incorporating the precursor-derived splice junction phosphate into the mature tRNA as a canonical 3',5'-phosphodiester. May act as an RNA ligase with broad substrate specificity, and may function toward other RNAs. In Bos taurus (Bovine), this protein is RNA-splicing ligase RtcB homolog.